A 391-amino-acid chain; its full sequence is S-adenosylmethionine synthase (391 aa).

His14 contributes to the ATP binding site. A Mg(2+)-binding site is contributed by Asp16. Glu42 provides a ligand contact to K(+). L-methionine contacts are provided by Glu55 and Gln98. Positions 98-108 (QSADIAMGVDE) are flexible loop. ATP contacts are provided by residues 172–174 (DGK), 238–239 (RF), Asp247, 253–254 (RK), Ala270, and Lys274. Residue Asp247 coordinates L-methionine. Lys278 serves as a coordination point for L-methionine.

Belongs to the AdoMet synthase family. Homotetramer; dimer of dimers. The cofactor is Mg(2+). K(+) serves as cofactor.

The protein resides in the cytoplasm. It carries out the reaction L-methionine + ATP + H2O = S-adenosyl-L-methionine + phosphate + diphosphate. It functions in the pathway amino-acid biosynthesis; S-adenosyl-L-methionine biosynthesis; S-adenosyl-L-methionine from L-methionine: step 1/1. Functionally, catalyzes the formation of S-adenosylmethionine (AdoMet) from methionine and ATP. The overall synthetic reaction is composed of two sequential steps, AdoMet formation and the subsequent tripolyphosphate hydrolysis which occurs prior to release of AdoMet from the enzyme. The polypeptide is S-adenosylmethionine synthase (Clostridium acetobutylicum (strain ATCC 824 / DSM 792 / JCM 1419 / IAM 19013 / LMG 5710 / NBRC 13948 / NRRL B-527 / VKM B-1787 / 2291 / W)).